The sequence spans 376 residues: MKIVVDENMPYVEPLFGALGEIIPVNGRTLTPEQVQDADVLLVRSVTRVNAALLDANPKLKFVGSATIGTDHVDLAYLARRGIPFSNAPGCNATAVGEFAFIAMLELAARFNSPLKGKVVGIVGAGNTGSATAKCLEAYGIKVLLNDPIKAAEGDPRHFVSLETLLHQADIISLHVPITRSGEHKTLHLFDEARLMSLKPNTWLVNCCRGDVIDNQALIKVKQQRDDLKLVLDVWEGEPHPMPELVPFAEFATPHIAGYSLEGKARGTFMLYQKLCELLAIPANKRLSELLPPFHFKAVELEQTPDEKALLQLARFVYDLRDDDAVFRNGFAKENGFDIMRKNHKHRREFSALALAYHGQSEVDWLSNLGFSGVGR.

Residues Ser45 and Thr67 each coordinate substrate. NAD(+) is bound at residue Asp147. Residue Arg209 is part of the active site. NAD(+) is bound at residue Asp233. Glu238 is an active-site residue. The Proton donor role is filled by His255. Residue Gly258 participates in NAD(+) binding. Tyr259 serves as a coordination point for substrate.

It belongs to the D-isomer specific 2-hydroxyacid dehydrogenase family. PdxB subfamily. Homodimer.

It is found in the cytoplasm. It carries out the reaction 4-phospho-D-erythronate + NAD(+) = (R)-3-hydroxy-2-oxo-4-phosphooxybutanoate + NADH + H(+). It participates in cofactor biosynthesis; pyridoxine 5'-phosphate biosynthesis; pyridoxine 5'-phosphate from D-erythrose 4-phosphate: step 2/5. In terms of biological role, catalyzes the oxidation of erythronate-4-phosphate to 3-hydroxy-2-oxo-4-phosphonooxybutanoate. The chain is Erythronate-4-phosphate dehydrogenase from Shewanella sp. (strain MR-4).